The primary structure comprises 96 residues: MDMKKLMKQMQQAQVAAGKIQDELAAQSVEGTASGLVTVQMNGHGKVTSLKIKPEAVDGDDVEALEDLILAAINDAAEKAEGLQREATAGLGLPGF.

This sequence belongs to the YbaB/EbfC family. Homodimer.

Its subcellular location is the cytoplasm. The protein localises to the nucleoid. Binds to DNA and alters its conformation. May be involved in regulation of gene expression, nucleoid organization and DNA protection. The sequence is that of Nucleoid-associated protein DR_0199 from Deinococcus radiodurans (strain ATCC 13939 / DSM 20539 / JCM 16871 / CCUG 27074 / LMG 4051 / NBRC 15346 / NCIMB 9279 / VKM B-1422 / R1).